The following is a 476-amino-acid chain: Argininosuccinate lyase (476 aa).

Belongs to the lyase 1 family. Argininosuccinate lyase subfamily.

It is found in the cytoplasm. The catalysed reaction is 2-(N(omega)-L-arginino)succinate = fumarate + L-arginine. It participates in amino-acid biosynthesis; L-arginine biosynthesis; L-arginine from L-ornithine and carbamoyl phosphate: step 3/3. This is Argininosuccinate lyase from Leptothrix cholodnii (strain ATCC 51168 / LMG 8142 / SP-6) (Leptothrix discophora (strain SP-6)).